Here is a 190-residue protein sequence, read N- to C-terminus: Holliday junction branch migration complex subunit RuvA (190 aa).

The interval 1-64 (MIGKLTGTLL…EDAQLLYGFG (64 aa)) is domain I. A domain II region spans residues 65-137 (TAQERQAFRE…LKGKLGADVG (73 aa)). The segment at 137–141 (GVRAH) is flexible linker. Residues 142 to 190 (AANDNQADILQALLALGYNDKEAAAALKALPADVGVSEGIKLALKSLSK) form a domain III region.

It belongs to the RuvA family. In terms of assembly, homotetramer. Forms an RuvA(8)-RuvB(12)-Holliday junction (HJ) complex. HJ DNA is sandwiched between 2 RuvA tetramers; dsDNA enters through RuvA and exits via RuvB. An RuvB hexamer assembles on each DNA strand where it exits the tetramer. Each RuvB hexamer is contacted by two RuvA subunits (via domain III) on 2 adjacent RuvB subunits; this complex drives branch migration. In the full resolvosome a probable DNA-RuvA(4)-RuvB(12)-RuvC(2) complex forms which resolves the HJ.

It is found in the cytoplasm. Its function is as follows. The RuvA-RuvB-RuvC complex processes Holliday junction (HJ) DNA during genetic recombination and DNA repair, while the RuvA-RuvB complex plays an important role in the rescue of blocked DNA replication forks via replication fork reversal (RFR). RuvA specifically binds to HJ cruciform DNA, conferring on it an open structure. The RuvB hexamer acts as an ATP-dependent pump, pulling dsDNA into and through the RuvAB complex. HJ branch migration allows RuvC to scan DNA until it finds its consensus sequence, where it cleaves and resolves the cruciform DNA. The chain is Holliday junction branch migration complex subunit RuvA from Acidovorax sp. (strain JS42).